Consider the following 151-residue polypeptide: UPF0735 ACT domain-containing protein SSP1116 (151 aa).

Residues 74–149 enclose the ACT domain; it reads TLILYVNDIV…HVSKVELISM (76 aa).

This sequence belongs to the UPF0735 family.

The polypeptide is UPF0735 ACT domain-containing protein SSP1116 (Staphylococcus saprophyticus subsp. saprophyticus (strain ATCC 15305 / DSM 20229 / NCIMB 8711 / NCTC 7292 / S-41)).